The chain runs to 599 residues: Elongation factor 4 (599 aa).

Residues 2 to 184 enclose the tr-type G domain; it reads KNIRNFSIIA…EIVAKIPAPK (183 aa). GTP is bound by residues 14 to 19 and 131 to 134; these read DHGKST and NKID.

It belongs to the TRAFAC class translation factor GTPase superfamily. Classic translation factor GTPase family. LepA subfamily.

It localises to the cell inner membrane. The catalysed reaction is GTP + H2O = GDP + phosphate + H(+). Functionally, required for accurate and efficient protein synthesis under certain stress conditions. May act as a fidelity factor of the translation reaction, by catalyzing a one-codon backward translocation of tRNAs on improperly translocated ribosomes. Back-translocation proceeds from a post-translocation (POST) complex to a pre-translocation (PRE) complex, thus giving elongation factor G a second chance to translocate the tRNAs correctly. Binds to ribosomes in a GTP-dependent manner. This is Elongation factor 4 from Mannheimia succiniciproducens (strain KCTC 0769BP / MBEL55E).